A 405-amino-acid chain; its full sequence is Imidazolonepropionase (405 aa).

Fe(3+) is bound by residues H70 and H72. The Zn(2+) site is built by H70 and H72. The 4-imidazolone-5-propanoate site is built by R79, Y142, and H175. Residue Y142 participates in N-formimidoyl-L-glutamate binding. Residue H240 participates in Fe(3+) binding. Residue H240 coordinates Zn(2+). A 4-imidazolone-5-propanoate-binding site is contributed by Q243. D315 lines the Fe(3+) pocket. D315 contacts Zn(2+). N-formimidoyl-L-glutamate-binding residues include N317 and G319. A 4-imidazolone-5-propanoate-binding site is contributed by T320.

This sequence belongs to the metallo-dependent hydrolases superfamily. HutI family. The cofactor is Zn(2+). Requires Fe(3+) as cofactor.

The protein resides in the cytoplasm. It carries out the reaction 4-imidazolone-5-propanoate + H2O = N-formimidoyl-L-glutamate. Its pathway is amino-acid degradation; L-histidine degradation into L-glutamate; N-formimidoyl-L-glutamate from L-histidine: step 3/3. Its function is as follows. Catalyzes the hydrolytic cleavage of the carbon-nitrogen bond in imidazolone-5-propanoate to yield N-formimidoyl-L-glutamate. It is the third step in the universal histidine degradation pathway. In Ectopseudomonas mendocina (strain ymp) (Pseudomonas mendocina), this protein is Imidazolonepropionase.